The chain runs to 161 residues: Transcription initiation factor TFIID subunit 12 (161 aa).

Residues 15-55 (FSSIKPEPASTPPQGSMANSTAVVKIPGTPGAGGRLSPENN) form a disordered region. Residue Lys19 forms a Glycyl lysine isopeptide (Lys-Gly) (interchain with G-Cter in SUMO2) linkage. Positions 26–36 (PPQGSMANSTA) are enriched in polar residues. At Thr43 the chain carries Phosphothreonine. At Ser51 the chain carries Phosphoserine. Position 59 is a phosphothreonine (Thr59). Residues 59 to 126 (TKKKLQDLVR…QLHLERQWNM (68 aa)) enclose the Histone-fold domain.

The protein belongs to the TAF12 family. In terms of assembly, component of the TFIID basal transcription factor complex, composed of TATA-box-binding protein TBP, and a number of TBP-associated factors (TAFs), including TAF1, TAF2, TAF3, TAF4, TAF5, TAF6, TAF7, TAF8, TAF9, TAF10, TAF11, TAF12 and TAF13. Component of the TATA-binding protein-free TAF complex (TFTC), the PCAF histone acetylase complex and the STAGA transcription coactivator-HAT complex. Component of the PCAF complex, at least composed of TADA2L/ADA2, TADA3L/ADA3, TAF5L/PAF65-beta, SUPT3H, TAF6L, TAF9, TAF10, TAF12 and TRRAP. Component of the STAGA transcription coactivator-HAT complex, at least composed of SUPT3H, GCN5L2, TAF5L, TAF6L, STAF65-gamma/SUPT7L, TADA3L, TAD1L, TAF10, TAF12, TRRAP and TAF9. Interacts with ATF7 (via the transactivation domain); the interaction is prevented by sumoylation of ATF7. As to quaternary structure, interacts with TBP; the interaction is direct. Interacts with TAF10; the interaction is direct. Interacts with ATF7, promoting transactivation by ATF7. Does not promote the transactivation of ATF7. As to expression, ubiquitous.

It localises to the nucleus. Its function is as follows. The TFIID basal transcription factor complex plays a major role in the initiation of RNA polymerase II (Pol II)-dependent transcription. TFIID recognizes and binds promoters with or without a TATA box via its subunit TBP, a TATA-box-binding protein, and promotes assembly of the pre-initiation complex (PIC). The TFIID complex consists of TBP and TBP-associated factors (TAFs), including TAF1, TAF2, TAF3, TAF4, TAF5, TAF6, TAF7, TAF8, TAF9, TAF10, TAF11, TAF12 and TAF13. Component of the TATA-binding protein-free TAF complex (TFTC), the PCAF histone acetylase complex and the STAGA transcription coactivator-HAT complex. This is Transcription initiation factor TFIID subunit 12 from Homo sapiens (Human).